The sequence spans 1009 residues: Type VII secretion system accessory factor EsaA (1009 aa).

6 consecutive transmembrane segments (helical) span residues 7 to 27, 822 to 842, 869 to 889, 903 to 923, 928 to 948, and 979 to 999; these read IYAL…IFFV, ISPT…AYIF, VITS…VGLI, KFIL…TYLL, SIGM…MNNL, and IGLA…LNMF.

It belongs to the EsaA family. Homodimer. Interacts with EssB.

It localises to the cell membrane. In terms of biological role, component of the type VII secretion system (Ess). Provides together with EssB and other components such as EssC and EssE a secretion platform across the cytoplasmic membrane in the host. This is Type VII secretion system accessory factor EsaA from Staphylococcus aureus (strain Mu50 / ATCC 700699).